A 489-amino-acid chain; its full sequence is Cryptochrome DASH (489 aa).

Residues 6-140 (PTVLVWFRND…EAKGYWGSTL (135 aa)) form the Photolyase/cryptochrome alpha/beta domain.

This sequence belongs to the DNA photolyase class-1 family. FAD is required as a cofactor. (6R)-5,10-methylene-5,6,7,8-tetrahydrofolate serves as cofactor.

Its function is as follows. May have a photoreceptor function. Binds DNA; represses transcription of at least 8 genes, including slr0364 and slr1866. Does not encode a DNA photolyase function. Its disruption does not affect circadian rhythm. The protein is Cryptochrome DASH (cry) of Synechocystis sp. (strain ATCC 27184 / PCC 6803 / Kazusa).